The primary structure comprises 773 residues: Protein YhgF (773 aa).

One can recognise an S1 motif domain in the interval 651-720; that stretch reads GMILEGAVTN…QRKRIALTMR (70 aa). Residues 721-773 are disordered; it reads LDEQPGETNARRGGGNERPQNNRPAAKPRGREAQPAGNSAMMDALAAAMGKKR.

In Escherichia coli (strain K12), this protein is Protein YhgF (yhgF).